A 93-amino-acid chain; its full sequence is MKCAVLFLSVIALVHIFVVEAEEEPDSDALVPQERACLARGETCKDDCECCDCDNQCYCPFDWFGGKWHPVGCSCAHANQYFCDHKKEKCKKA.

A signal peptide spans 1 to 21 (MKCAVLFLSVIALVHIFVVEA). The propeptide occupies 22–34 (EEEPDSDALVPQE). Cystine bridges form between Cys37-Cys51, Cys44-Cys57, Cys50-Cys75, Cys59-Cys73, and Cys83-Cys90.

It belongs to the neurotoxin 09 (Tx3-6) family. In terms of tissue distribution, expressed by the venom gland.

It localises to the secreted. Probable neurotoxin. The chain is U11-ctenitoxin-Pn1a from Phoneutria nigriventer (Brazilian armed spider).